The primary structure comprises 387 residues: Phosphoglycerate kinase (387 aa).

Residues 21–23 (DLN), R36, 59–62 (HLGR), R113, and R146 each bind substrate. ATP is bound by residues K197, E314, and 340–343 (GGDT).

It belongs to the phosphoglycerate kinase family. Monomer.

Its subcellular location is the cytoplasm. It catalyses the reaction (2R)-3-phosphoglycerate + ATP = (2R)-3-phospho-glyceroyl phosphate + ADP. It functions in the pathway carbohydrate degradation; glycolysis; pyruvate from D-glyceraldehyde 3-phosphate: step 2/5. The protein is Phosphoglycerate kinase of Pseudomonas putida (strain GB-1).